The sequence spans 496 residues: MAAAAAPRGWQRGEPRALSRAVKLLQRLEEQCRDPRMVTGPPSLRDLLPRTAQLLGEVAKARREAREDPEGPGGADDFLAIYLANLEVKGRQVAELLPPRGKKDVNQDVFREGSRFRRQLAKLALIFSHMHAELSALFPAGKYCGHLYQLTKGSAHIFWRQNCGVRCVLPWAEFQSLLCACHPVEPGPTMQALRSTLDLTCNGHVSVFEFDVFTRLFQPWPTLLRNWQLLAVNHPGYMAFLTYDEVQTRLQAYRDKPGSYIFRPSCTRLGQWAIGYVSSDGSILQTIPLNKPLLQVLLKGQKDGIFLFPDGKKHNPDLTELCRVEPYQRIQVSEEQLLLYQAMNSTFQLCKICAERDKDVRIEPCGHLLCSCCLAAWQDSDSQTCPFCRCEIKGREAVSICQAQERPTEVRTAADGSRDNCHQEAAEQKLGPVIPSAPSLLPEDQFPQGPQDKGWLTLAPLALPRLRPPLPLPKMASVLWEVTSRPRAREEATESS.

The 4H stretch occupies residues 7–144 (PRGWQRGEPR…SALFPAGKYC (138 aa)). Residues 7–320 (PRGWQRGEPR…GKKHNPDLTE (314 aa)) enclose the Cbl-PTB domain. The interval 145–217 (GHLYQLTKGS…FEFDVFTRLF (73 aa)) is EF-hand-like. Asp198, Thr200, Asn202, and Glu209 together coordinate Ca(2+). The segment at 218 to 320 (QPWPTLLRNW…GKKHNPDLTE (103 aa)) is SH2-like. Arg263 serves as a coordination point for 4-O-phospho-L-tyrosine. Positions 321-349 (LCRVEPYQRIQVSEEQLLLYQAMNSTFQL) are linker. Phosphotyrosine; by SRC is present on Tyr340. The RING-type zinc finger occupies 350-389 (CKICAERDKDVRIEPCGHLLCSCCLAAWQDSDSQTCPFCR). The interval 350–494 (CKICAERDKD…RPRAREEATE (145 aa)) is interaction with RET. Residues 432 to 453 (PVIPSAPSLLPEDQFPQGPQDK) form a disordered region.

As to quaternary structure, interacts with Ubiquitin-conjugating enzyme E2 UBE2D2 and UBE2D3. Isoform 1 interacts with EGFR (tyrosine phosphorylated). Interacts with the SH3 domain proteins LYN and CRK. Interacts (via RING-type zinc finger) with TGFB1I1 (via LIM zinc-binding domain 2); the interaction is direct and enhances the E3 activity. Interacts directly with RET (inactive) and CD2AP; dissociates from RET upon RET activation by GDNF which also increases the interaction with CD2AP suggesting dissociation as CBLC:CD2AP complex. Interacts with SRC; the interaction is enhanced when SRC is phosphorylated at 'Tyr-419'. Phosphorylated on tyrosines by EGFR. In terms of processing, phosphorylated on multiple tyrosine residues by SRC. Isoform 1, but not isoform 2, is phosphorylated on tyrosines by EGFR. Post-translationally, autoubiquitinated, when phosphorylated at Tyr-340. In terms of tissue distribution, widely expressed in tissues, where the expression is restricted to epithelial cells (at protein level).

It carries out the reaction S-ubiquitinyl-[E2 ubiquitin-conjugating enzyme]-L-cysteine + [acceptor protein]-L-lysine = [E2 ubiquitin-conjugating enzyme]-L-cysteine + N(6)-ubiquitinyl-[acceptor protein]-L-lysine.. With respect to regulation, phosphorylation at Tyr-340 is necessary and sufficient for the activation of E3 activity. Functionally, acts as an E3 ubiquitin-protein ligase, which accepts ubiquitin from specific E2 ubiquitin-conjugating enzymes, and then transfers it to substrates promoting their degradation by the proteasome. Functionally coupled with the E2 ubiquitin-protein ligases UB2D1, UB2D2 and UB2D3. Regulator of EGFR mediated signal transduction; upon EGF activation, ubiquitinates EGFR. Isoform 1, but not isoform 2, inhibits EGF stimulated MAPK1 activation. Promotes ubiquitination of SRC phosphorylated at 'Tyr-424', has the highest ubiquitin ligase activity among CBL family proteins. In collaboration with CD2AP may act as regulatory checkpoint for Ret signaling by modulating the rate of RET degradation after ligand activation; CD2AP converts it from an inhibitor to a promoter of RET degradation; the function limits the potency of GDNF on neuronal survival. The polypeptide is E3 ubiquitin-protein ligase CBL-C (Cblc) (Mus musculus (Mouse)).